The primary structure comprises 971 residues: U2 snRNP component HSH155 (971 aa).

2 disordered regions span residues 1 to 22 (MSHP…LGGQ) and 54 to 118 (TRTV…AVKE). Positions 8 to 22 (VNANNSDKSHQLGGQ) are enriched in polar residues. Residues 54–75 (TRTVQNREDSYHKRRFDMKFEP) are compositionally biased toward basic and acidic residues. Over residues 78 to 90 (DTQTVTSSENTQD) the composition is skewed to polar residues. HEAT repeat units lie at residues 199–237 (MIFN…DLTK), 273–310 (AGLK…ALGV), 350–387 (NHLT…NSYP), 513–550 (LGCS…LLGT), 596–633 (PFLA…VIKN), 680–717 (PPIN…LAPT), 722–759 (KEWM…AIGP), 792–829 (CGPY…YIGN), and 832–870 (KDYI…NCSG).

This sequence belongs to the SF3B1 family. In terms of assembly, belongs to the CWC complex (or CEF1-associated complex), a spliceosome sub-complex reminiscent of a late-stage spliceosome composed of the U2, U5 and U6 snRNAs and at least BUD13, BUD31, BRR2, CDC40, CEF1, CLF1, CUS1, CWC2, CWC15, CWC21, CWC22, CWC23, CWC24, CWC25, CWC27, ECM2, HSH155, IST3, ISY1, LEA1, MSL1, NTC20, PRP8, PRP9, PRP11, PRP19, PRP21, PRP22, PRP45, PRP46, SLU7, SMB1, SMD1, SMD2, SMD3, SMX2, SMX3, SNT309, SNU114, SPP2, SYF1, SYF2, RSE1 and YJU2. Interacts with RDS3.

It is found in the nucleus. In terms of biological role, contacts pre-mRNA on both sides of the branch site early in spliceosome assembly. This Saccharomyces cerevisiae (strain ATCC 204508 / S288c) (Baker's yeast) protein is U2 snRNP component HSH155 (HSH155).